Here is a 145-residue protein sequence, read N- to C-terminus: MAKSPLGLFAGRVLKAKKKRQRWSISRYKRRELGLDRKANPMGGSPQARGIVLEKVGVEAKQPNSAVRKCVRVQLIKNGKSITAFLPRDGAMNFIDEHDEVHVEGMGATQGGAMGDIPGVRFKVFKVNGTSLHELVIGKKEKPRR.

The protein belongs to the universal ribosomal protein uS12 family. Part of the 30S ribosomal subunit.

With S4 and S5 plays an important role in translational accuracy. Located at the interface of the 30S and 50S subunits. The polypeptide is Small ribosomal subunit protein uS12 (Cenarchaeum symbiosum (strain A)).